We begin with the raw amino-acid sequence, 976 residues long: Leucine--tRNA ligase (976 aa).

A 'HIGH' region motif is present at residues 63-74; sequence PYPSGVGLHVGH. The 'KMSKS' region signature appears at 745–749; it reads KMGKS. K748 contributes to the ATP binding site.

Belongs to the class-I aminoacyl-tRNA synthetase family.

Its subcellular location is the cytoplasm. It catalyses the reaction tRNA(Leu) + L-leucine + ATP = L-leucyl-tRNA(Leu) + AMP + diphosphate. The sequence is that of Leucine--tRNA ligase from Corynebacterium jeikeium (strain K411).